Reading from the N-terminus, the 430-residue chain is Adenylosuccinate synthetase (430 aa).

Residues 12 to 18 (GDEGKGK) and 40 to 42 (GHT) contribute to the GTP site. Aspartate 13 (proton acceptor) is an active-site residue. The Mg(2+) site is built by aspartate 13 and glycine 40. IMP contacts are provided by residues 13 to 16 (DEGK), 38 to 41 (NAGH), threonine 130, arginine 144, glutamine 224, threonine 239, and arginine 303. The active-site Proton donor is the histidine 41. A substrate-binding site is contributed by 299–305 (TVTSRKR). Residues arginine 305, 331 to 333 (KLD), and 413 to 415 (STS) contribute to the GTP site.

This sequence belongs to the adenylosuccinate synthetase family. Homodimer. It depends on Mg(2+) as a cofactor.

The protein resides in the cytoplasm. It catalyses the reaction IMP + L-aspartate + GTP = N(6)-(1,2-dicarboxyethyl)-AMP + GDP + phosphate + 2 H(+). It functions in the pathway purine metabolism; AMP biosynthesis via de novo pathway; AMP from IMP: step 1/2. Plays an important role in the de novo pathway of purine nucleotide biosynthesis. Catalyzes the first committed step in the biosynthesis of AMP from IMP. This Pelagibacter ubique (strain HTCC1062) protein is Adenylosuccinate synthetase.